Reading from the N-terminus, the 120-residue chain is NAD(P)H-quinone oxidoreductase subunit 3, chloroplastic (120 aa).

3 helical membrane-spanning segments follow: residues I9 to G29, M64 to M84, and V88 to L108.

Belongs to the complex I subunit 3 family. NDH is composed of at least 16 different subunits, 5 of which are encoded in the nucleus.

It is found in the plastid. It localises to the chloroplast thylakoid membrane. The enzyme catalyses a plastoquinone + NADH + (n+1) H(+)(in) = a plastoquinol + NAD(+) + n H(+)(out). It carries out the reaction a plastoquinone + NADPH + (n+1) H(+)(in) = a plastoquinol + NADP(+) + n H(+)(out). Its function is as follows. NDH shuttles electrons from NAD(P)H:plastoquinone, via FMN and iron-sulfur (Fe-S) centers, to quinones in the photosynthetic chain and possibly in a chloroplast respiratory chain. The immediate electron acceptor for the enzyme in this species is believed to be plastoquinone. Couples the redox reaction to proton translocation, and thus conserves the redox energy in a proton gradient. In Olimarabidopsis pumila (Dwarf rocket), this protein is NAD(P)H-quinone oxidoreductase subunit 3, chloroplastic.